Consider the following 153-residue polypeptide: Ubiquitin-conjugating enzyme E2 35 (153 aa).

One can recognise a UBC core domain in the interval 5 to 151 (NLPRRIIKET…AKEWTRLYAS (147 aa)). C89 (glycyl thioester intermediate) is an active-site residue.

It belongs to the ubiquitin-conjugating enzyme family. Interacts with yeast and human Mms2, with the RING domain of RGLG2 and with UEV1A, UEV1B, UEV1C and UEV1D. In terms of tissue distribution, ubiquitously expressed at low level. Mainly expressed in the vasculature.

It catalyses the reaction S-ubiquitinyl-[E1 ubiquitin-activating enzyme]-L-cysteine + [E2 ubiquitin-conjugating enzyme]-L-cysteine = [E1 ubiquitin-activating enzyme]-L-cysteine + S-ubiquitinyl-[E2 ubiquitin-conjugating enzyme]-L-cysteine.. It functions in the pathway protein modification; protein ubiquitination. In terms of biological role, catalyzes the synthesis of non-canonical poly-ubiquitin chains that are linked through 'Lys-63'. This type of poly-ubiquitination does not lead to protein degradation by the proteasome. Mediates transcriptional activation of target genes. Required for postreplication repair of UV-damaged DNA and for adapting root developmental programs to suboptimal availability of iron. The protein is Ubiquitin-conjugating enzyme E2 35 (UBC35) of Arabidopsis thaliana (Mouse-ear cress).